Consider the following 496-residue polypeptide: Gamma-aminobutyric acid receptor subunit beta-like (496 aa).

Residues Met-1–Ala-20 constitute a signal peptide (or 27). Over Gln-21–Tyr-258 the chain is Extracellular. N-linked (GlcNAc...) asparagine glycans are attached at residues Asn-39 and Asn-189. Cys-176 and Cys-190 are joined by a disulfide. The next 3 helical transmembrane spans lie at Phe-259 to Ile-280, Thr-285 to Val-306, and Ala-318 to Tyr-342. At Thr-343–Lys-472 the chain is on the cytoplasmic side. A helical transmembrane segment spans residues Tyr-473–Ile-494.

It belongs to the ligand-gated ion channel (TC 1.A.9) family. Gamma-aminobutyric acid receptor (TC 1.A.9.5) subfamily. In terms of assembly, generally pentameric. There are five types of GABA(A) receptor chains: alpha, beta, gamma, delta, and rho. Interacts with Grd (alpha chain).

The protein localises to the postsynaptic cell membrane. The protein resides in the cell membrane. In terms of biological role, GABA, an inhibitory neurotransmitter, mediates neuronal inhibition by binding to the GABA receptor and opening an integral chloride channel. Combines with the ligand-gated ion channel subunit GRD to form cation-selective GABA-gated ion channels when coexpressed in Xenopus laevis oocytes. The sequence is that of Gamma-aminobutyric acid receptor subunit beta-like (Lcch3) from Drosophila melanogaster (Fruit fly).